Here is a 303-residue protein sequence, read N- to C-terminus: Protoheme IX farnesyltransferase (303 aa).

6 helical membrane passes run 25-45 (MGLV…AIVM), 54-74 (IPQI…ACAL), 118-138 (CLFL…VGYV), 166-186 (IGWV…FLVV), 230-250 (LVLL…FVVI), and 280-300 (FVYS…VSLI).

Belongs to the UbiA prenyltransferase family. Protoheme IX farnesyltransferase subfamily. In terms of assembly, interacts with CtaA.

Its subcellular location is the cell membrane. The enzyme catalyses heme b + (2E,6E)-farnesyl diphosphate + H2O = Fe(II)-heme o + diphosphate. It functions in the pathway porphyrin-containing compound metabolism; heme O biosynthesis; heme O from protoheme: step 1/1. In terms of biological role, converts heme B (protoheme IX) to heme O by substitution of the vinyl group on carbon 2 of heme B porphyrin ring with a hydroxyethyl farnesyl side group. The protein is Protoheme IX farnesyltransferase of Staphylococcus epidermidis (strain ATCC 35984 / DSM 28319 / BCRC 17069 / CCUG 31568 / BM 3577 / RP62A).